Reading from the N-terminus, the 160-residue chain is Transcription antitermination protein NusB (160 aa).

This sequence belongs to the NusB family.

In terms of biological role, involved in transcription antitermination. Required for transcription of ribosomal RNA (rRNA) genes. Binds specifically to the boxA antiterminator sequence of the ribosomal RNA (rrn) operons. This Gluconobacter oxydans (strain 621H) (Gluconobacter suboxydans) protein is Transcription antitermination protein NusB.